A 292-amino-acid chain; its full sequence is Protease HtpX (292 aa).

Helical transmembrane passes span 5 to 25 and 34 to 54; these read IFLF…VMSL and SGLL…SLLL. H140 is a Zn(2+) binding site. E141 is an active-site residue. A Zn(2+)-binding site is contributed by H144. Transmembrane regions (helical) follow at residues 155–175 and 193–213; these read LLQG…GGII and IIVF…AMWF. Zn(2+) is bound at residue E218.

The protein belongs to the peptidase M48B family. Zn(2+) serves as cofactor.

The protein localises to the cell inner membrane. The chain is Protease HtpX from Xanthomonas axonopodis pv. citri (strain 306).